The chain runs to 1894 residues: Fibronectin type III domain-containing protein 1 (1894 aa).

Positions 1 to 32 (MAPEAGATLRAPRRLSWAALLLLAALLPVASS) are cleaved as a signal peptide. In terms of domain architecture, Fibronectin type-III 1 spans 39-131 (HPLKPRHVKL…PVYRAESPPG (93 aa)). An N-linked (GlcNAc...) asparagine glycan is attached at Asn-149. Fibronectin type-III domains follow at residues 158–258 (PNKP…SEED), 262–357 (VPDD…TPES), and 362–457 (APEN…MPTT). Disordered stretches follow at residues 455-500 (PTTS…PQGR), 515-1271 (ANGG…TVSP), 1311-1350 (LSRQPARPSYRQGYNGRPNVEGKVLPGSNGKPNGQRIING), and 1444-1515 (THPP…CPPG). Positions 565–574 (TLRPPSRHGH) are enriched in basic residues. Positions 614–625 (PSASASPAHHAS) are enriched in low complexity. Over residues 626 to 641 (TQGTSHRPSLPASLND) the composition is skewed to polar residues. Low complexity-rich tracts occupy residues 711–722 (SASAPPSRLSPP) and 759–778 (SRSTMSSSVSSHLSSRTQVS). Position 717 is a phosphoserine (Ser-717). Residues 786–799 (GESHGDGDREDGGR) show a composition bias toward basic and acidic residues. Polar residues-rich tracts occupy residues 941-957 (KYSSLASKAQDVQQSTD) and 1027-1060 (SPSQPRLSLTQAGRPRPTSQGRSHSSSDPYTASS). Residues 1071-1088 (QDEDAQGSYDDDSTEVEA) are compositionally biased toward acidic residues. Over residues 1166–1176 (PLSSKSQQSVS) the composition is skewed to polar residues. Positions 1197 to 1209 (SSSVPKWPSSSTP) are enriched in low complexity. The segment covering 1211 to 1226 (GGKDADGSLAKEEREP) has biased composition (basic and acidic residues). Low complexity predominate over residues 1445–1504 (HPPTTTMQPTTTTTPLPTTTTPRPTTATTRRTTTTRRTTTRRPTTTVRTTTRTTTTTTPT). The Fibronectin type-III 5 domain maps to 1658–1752 (APRNITVVAV…PSVSFVTESD (95 aa)). A glycan (N-linked (GlcNAc...) asparagine) is linked at Asn-1661.

Almost absent from healthy skin; especially in epidermal keratinocytes, skin fibroblasts or endothelial cells and is barely detectable in benign melanocytic naevi. Expressed in the stroma close to skin tumors, in the tumor cells themselves and in the epidermis of psoriasis.

It is found in the secreted. Functionally, may be an activator of G protein signaling. This chain is Fibronectin type III domain-containing protein 1 (FNDC1), found in Homo sapiens (Human).